A 290-amino-acid polypeptide reads, in one-letter code: Membrane protein insertase YidC 1 (290 aa).

An N-terminal signal peptide occupies residues 1 to 19 (MKKKALLPLFLGIMIFLAG). Residue Cys20 is the site of N-palmitoyl cysteine attachment. The S-diacylglycerol cysteine moiety is linked to residue Cys20. The next 5 membrane-spanning stretches (helical) occupy residues 56-76 (FGLA…PFML), 134-154 (MLGC…YFVL), 176-196 (PDIW…VVSS), 211-231 (MVIS…ALGL), and 232-252 (YWSV…IYYS). Positions 270-290 (HNPYSKKKGKNTQVVSKKNKK) are disordered. Residues 280 to 290 (NTQVVSKKNKK) show a composition bias toward polar residues.

Belongs to the OXA1/ALB3/YidC family. Type 2 subfamily.

The protein localises to the cell membrane. Functionally, required for the insertion and/or proper folding and/or complex formation of integral membrane proteins into the membrane. Involved in integration of membrane proteins that insert both dependently and independently of the Sec translocase complex, as well as at least some lipoproteins. The sequence is that of Membrane protein insertase YidC 1 from Staphylococcus epidermidis (strain ATCC 12228 / FDA PCI 1200).